The primary structure comprises 227 residues: Charged multivesicular body protein 4c (227 aa).

The tract at residues 1-27 is disordered; that stretch reads MSKITKLFKSSGGSGSSSKNRKGPSAQ. 2 coiled-coil regions span residues 32 to 94 and 129 to 187; these read KLRE…STIE and LEKI…MANV. The tract at residues 178–227 is disordered; sequence EDLNSQMANVNLPSVPSSKLPSTKLPSRPASSRKKVEDDDDMQMLAAWAT. Residues 189–206 show a composition bias toward low complexity; the sequence is LPSVPSSKLPSTKLPSRP.

It belongs to the SNF7 family. In terms of assembly, probable core component of the endosomal sorting required for transport complex III (ESCRT-III). ESCRT-III components are thought to multimerize to form a flat lattice on the perimeter membrane of the endosome.

It localises to the cytoplasm. Its subcellular location is the cytosol. The protein resides in the late endosome membrane. Functionally, probable core component of the endosomal sorting required for transport complex III (ESCRT-III) which is involved in multivesicular bodies (MVBs) formation and sorting of endosomal cargo proteins into MVBs. MVBs contain intraluminal vesicles (ILVs) that are generated by invagination and scission from the limiting membrane of the endosome and mostly are delivered to lysosomes enabling degradation of membrane proteins, such as stimulated growth factor receptors, lysosomal enzymes and lipids. Key component of the cytokinesis checkpoint, a process required to delay abscission to prevent both premature resolution of intercellular chromosome bridges and accumulation of DNA damage. This Xenopus laevis (African clawed frog) protein is Charged multivesicular body protein 4c (chmp4c).